Here is a 1848-residue protein sequence, read N- to C-terminus: Unconventional myosin-Vb (1848 aa).

Residue methionine 1 is modified to N-acetylmethionine. Residues 8 to 60 (SQCTRVWIPDPDEVWRSAELTKDYKEGDKSLQLRLEDETILEYPIDVQRNQLP) form the Myosin N-terminal SH3-like domain. The requires for interaction with LIMA1 stretch occupies residues 21–40 (VWRSAELTKDYKEGDKSLQL). The Myosin motor domain maps to 69-761 (VGENDLTALS…QVAYLEKLRA (693 aa)). 163 to 170 (GESGAGKT) contacts ATP. A disordered region spans residues 596 to 630 (KDPVPATTPGKGSSSKISVRSARPPMKVSNKEHKK). The interval 640–662 (LHLLMETLNATTPHYVRCIKPND) is actin-binding. IQ domains are found at residues 769–798 (IMIQKTVRGWLQKVKYHRLKGATLTLQRYC), 792–821 (LTLQRYCRGHLARRLAEHLRRIRAAVVLQK), 817–848 (VVLQKHYRMQRARQAYQRVRRAAVVIQAFTRA), 840–869 (VVIQAFTRAMFVRRTYRQVLMEHKATTIQK), 865–896 (TTIQKHVRGWMARRHFQRLRDAAIVIQCAFRM), and 888–917 (IVIQCAFRMLKARRELKALRIEARSAEHLK). 2 coiled-coil regions span residues 899-1266 (ARRE…ILRT) and 1341-1471 (RLLE…GMLE). Disordered regions lie at residues 1093 to 1123 (QTPGHRRNPSNQSSLESDSNYPSISTSEIGD) and 1166 to 1192 (QLEKREQQDSKKVQAEPPQTDIDLDPN). Over residues 1101–1121 (PSNQSSLESDSNYPSISTSEI) the composition is skewed to polar residues. A compositionally biased stretch (basic and acidic residues) spans 1166 to 1179 (QLEKREQQDSKKVQ). Phosphoserine is present on serine 1446. In terms of domain architecture, Dilute spans 1526-1803 (TSTINGIKKV…IRTIQAQLQE (278 aa)).

The protein belongs to the TRAFAC class myosin-kinesin ATPase superfamily. Myosin family. Component of the CART complex, at least composed of ACTN4, HGS/HRS, MYO5B and TRIM3. Interacts with RAB11FIP2, RAB11A, and RAB8A. Found in a complex with CFTR and RAB11A. Interacts with NPC1L1;. Interacts with LIMA1.

The protein localises to the cytoplasm. Functionally, may be involved in vesicular trafficking via its association with the CART complex. The CART complex is necessary for efficient transferrin receptor recycling but not for EGFR degradation. Required in a complex with RAB11A and RAB11FIP2 for the transport of NPC1L1 to the plasma membrane. Together with RAB11A participates in CFTR trafficking to the plasma membrane and TF (transferrin) recycling in nonpolarized cells. Together with RAB11A and RAB8A participates in epithelial cell polarization. Together with RAB25 regulates transcytosis. Required for proper localization of bile salt export pump ABCB11 at the apical/canalicular plasma membrane of hepatocytes. The chain is Unconventional myosin-Vb (MYO5B) from Homo sapiens (Human).